We begin with the raw amino-acid sequence, 99 residues long: Cell cycle protein GpsB (99 aa).

Positions 34–71 (LDMIIKDYETFHQEIEELQQENLQLKKQLEEASKKQPV) form a coiled coil.

The protein belongs to the GpsB family. In terms of assembly, forms polymers through the coiled coil domains. Interacts with PBP1, MreC and EzrA.

It is found in the cytoplasm. Divisome component that associates with the complex late in its assembly, after the Z-ring is formed, and is dependent on DivIC and PBP2B for its recruitment to the divisome. Together with EzrA, is a key component of the system that regulates PBP1 localization during cell cycle progression. Its main role could be the removal of PBP1 from the cell pole after pole maturation is completed. Also contributes to the recruitment of PBP1 to the division complex. Not essential for septum formation. The sequence is that of Cell cycle protein GpsB from Bacillus velezensis (strain DSM 23117 / BGSC 10A6 / LMG 26770 / FZB42) (Bacillus amyloliquefaciens subsp. plantarum).